The sequence spans 886 residues: Isoleucine--tRNA ligase (886 aa).

The short motif at 60 to 70 is the 'HIGH' region element; it reads PYANGDIHIGH. Glutamate 546 lines the L-isoleucyl-5'-AMP pocket. The short motif at 587 to 591 is the 'KMSKS' region element; the sequence is KMSKS. Lysine 590 contributes to the ATP binding site. The Zn(2+) site is built by cysteine 856, cysteine 859, cysteine 870, and cysteine 873.

This sequence belongs to the class-I aminoacyl-tRNA synthetase family. IleS type 1 subfamily. As to quaternary structure, monomer. The cofactor is Zn(2+).

The protein resides in the cytoplasm. It catalyses the reaction tRNA(Ile) + L-isoleucine + ATP = L-isoleucyl-tRNA(Ile) + AMP + diphosphate. Functionally, catalyzes the attachment of isoleucine to tRNA(Ile). As IleRS can inadvertently accommodate and process structurally similar amino acids such as valine, to avoid such errors it has two additional distinct tRNA(Ile)-dependent editing activities. One activity is designated as 'pretransfer' editing and involves the hydrolysis of activated Val-AMP. The other activity is designated 'posttransfer' editing and involves deacylation of mischarged Val-tRNA(Ile). The polypeptide is Isoleucine--tRNA ligase (Mesomycoplasma hyopneumoniae (strain 232) (Mycoplasma hyopneumoniae)).